Here is a 722-residue protein sequence, read N- to C-terminus: Inactive serine protease PAMR1 (722 aa).

Residues 1–21 (MALLVWSSLVVASLHLLGTAA) form the signal peptide. A glycan (N-linked (GlcNAc...) asparagine) is linked at asparagine 98. Cystine bridges form between cysteine 130/cysteine 152, cysteine 179/cysteine 201, cysteine 241/cysteine 252, cysteine 246/cysteine 262, cysteine 264/cysteine 273, cysteine 282/cysteine 331, cysteine 317/cysteine 344, and cysteine 416/cysteine 444. Positions 130-238 (CGEVIQAARG…DGFYVTFEEV (109 aa)) constitute a CUB domain. Positions 237–274 (EVTGCSSTPCFHDGTCIADKTGSYRCACLAGYTGRHCE) constitute an EGF-like domain. Sushi domains follow at residues 280-346 (KSCK…VCIK) and 393-446 (KPAL…SCIP). An N-linked (GlcNAc...) asparagine glycan is attached at asparagine 318. In terms of domain architecture, Peptidase S1 spans 447–722 (ICGKLENFNI…FKEWLEKNMK (276 aa)). N-linked (GlcNAc...) asparagine glycosylation occurs at asparagine 455. Cysteine 491 and cysteine 507 form a disulfide bridge. N-linked (GlcNAc...) asparagine glycosylation occurs at asparagine 616. Cystine bridges form between cysteine 632–cysteine 651 and cysteine 663–cysteine 699.

This sequence belongs to the peptidase S1 family.

It localises to the secreted. Functionally, may play a role in regeneration of skeletal muscle. The chain is Inactive serine protease PAMR1 (pamr1) from Xenopus tropicalis (Western clawed frog).